The primary structure comprises 883 residues: Phosphoenolpyruvate carboxylase (883 aa).

Active-site residues include His138 and Lys546.

This sequence belongs to the PEPCase type 1 family. Homotetramer. The cofactor is Mg(2+).

It catalyses the reaction oxaloacetate + phosphate = phosphoenolpyruvate + hydrogencarbonate. Its activity is regulated as follows. The enzyme has distinct binding sites for each of the allosteric effectors such as acetyl-CoA, fructose 1,6-bisphosphate, guanosine 3'-diphosphate 5'-diphosphate, long chain fatty acids, and L-aspartate. In terms of biological role, forms oxaloacetate, a four-carbon dicarboxylic acid source for the tricarboxylic acid cycle. The protein is Phosphoenolpyruvate carboxylase (ppc) of Salmonella typhi.